A 440-amino-acid polypeptide reads, in one-letter code: Transposon Ty1-MR1 Gag polyprotein (440 aa).

Polar residues-rich tracts occupy residues 1 to 31, 46 to 60, and 137 to 168; these read MESQ…TTQD, VSTQ…TPLS, and VGTH…TNQH. 3 disordered regions span residues 1-88, 137-174, and 350-424; these read MESQ…YPQQ, VGTH…PPPI, and QQES…TTEP. Positions 299-401 are RNA-binding; the sequence is NNGIPINNKV…NSQSRTARAH (103 aa). Basic and acidic residues predominate over residues 363 to 372; sequence SPSDEKKDSR. Residues 373–411 show a composition bias toward polar residues; sequence TYTNTTKPKSITRNSQKPNNSQSRTARAHNVSTFNNSPG.

Homotrimer.

Its subcellular location is the cytoplasm. Its function is as follows. Capsid protein (CA) is the structural component of the virus-like particle (VLP), forming the shell that encapsulates the retrotransposons dimeric RNA genome. The particles are assembled from trimer-clustered units and there are holes in the capsid shells that allow for the diffusion of macromolecules. CA also has nucleocapsid-like chaperone activity, promoting primer tRNA(i)-Met annealing to the multipartite primer-binding site (PBS), dimerization of Ty1 RNA and initiation of reverse transcription. The polypeptide is Transposon Ty1-MR1 Gag polyprotein (TY1A-MR1) (Saccharomyces cerevisiae (strain ATCC 204508 / S288c) (Baker's yeast)).